We begin with the raw amino-acid sequence, 562 residues long: Phosphopantothenoylcysteine decarboxylase subunit SIS2 (562 aa).

Polar residues predominate over residues 1–10 (MTAVASTSGK). 3 disordered regions span residues 1–63 (MTAV…SNAT), 97–165 (FSDL…KDYD), and 490–562 (GYPK…DKHQ). Residues 27–42 (GQKEILLDHEDAKGKD) show a composition bias toward basic and acidic residues. Composition is skewed to polar residues over residues 44-63 (IINSPVSGRQSISPTLSNAT) and 99-113 (DLKQQQKQDSLTQLK). Residues serine 47, serine 50, serine 54, and serine 56 each carry the phosphoserine modification. The segment covering 121–134 (SPNSNPAPVSNSIP) has biased composition (low complexity). Polar residues predominate over residues 142–156 (NHTNTSRTTQLSGSP). Serine 155 is modified (phosphoserine). Positions 496-553 (EEEDDDEDEEEDDDEEEDTEDKNENNNDDDDDDDDDDDDDDDDDDDDDDDDEDEDEAE) are enriched in acidic residues.

The protein belongs to the HFCD (homooligomeric flavin containing Cys decarboxylase) superfamily. As to quaternary structure, interacts with the C-terminal domain of PPZ1. Component of the phosphopantothenoylcysteine decarboxylase (PPCDC) complex, a heterotrimer composed of CAB3, SIS2 and VHS3.

The protein localises to the nucleus. It is found in the cytoplasm. Functionally, component of the phosphopantothenoylcysteine decarboxylase (PPCDC) involved in the coenzyme A synthesis. Acts as an inhibitory subunit of protein phosphatase PPZ1, which is involved in many cellular processes such as G1-S transition or salt tolerance. Also modulates the expression of the ENA1 ATPase. The polypeptide is Phosphopantothenoylcysteine decarboxylase subunit SIS2 (SIS2) (Saccharomyces cerevisiae (strain ATCC 204508 / S288c) (Baker's yeast)).